The primary structure comprises 954 residues: ATPase 9, plasma membrane-type (954 aa).

Over 1-66 (MAGNKDSSWD…EKKENKVLKF (66 aa)) the chain is Cytoplasmic. The helical transmembrane segment at 67–86 (LGFMWNPLSWVMELAAIMAI) threads the bilayer. Topologically, residues 87 to 98 (ALANGGGRPPDW) are extracellular. A helical transmembrane segment spans residues 99 to 119 (QDFVGITVLLIINSTISFIEE). At 120-248 (NNAGNAAAAL…GHFQKVLTAI (129 aa)) the chain is on the cytoplasmic side. Residues 249 to 269 (GNFCICSIAIGMLIEIVVMYP) form a helical membrane-spanning segment. The Extracellular portion of the chain corresponds to 270–278 (IQKRAYRDG). The chain crosses the membrane as a helical span at residues 279 to 296 (IDNLLVLLIGGIPIAMPT). Over 297–648 (VLSVTMAIGS…TSRAIFQRMK (352 aa)) the chain is Cytoplasmic. Asp-334 (4-aspartylphosphate intermediate) is an active-site residue. The Mg(2+) site is built by Asp-593 and Asp-597. A helical membrane pass occupies residues 649–670 (NYTIYAVSITIRIVMGFMLLAL). At 671–675 (IWKFD) the chain is on the extracellular side. A helical membrane pass occupies residues 676-698 (FSPFMVLIVAILNDGTIMTISKD). The Cytoplasmic portion of the chain corresponds to 699 to 714 (RVKPSPLPDSWKLKEI). A helical membrane pass occupies residues 715–735 (FATGVVLGTYLAVMTVVFFWA). Residues 736 to 756 (AESTDFFSAKFGVRSISGNPH) are Extracellular-facing. The chain crosses the membrane as a helical span at residues 757–777 (ELTAAVYLQVSIVSQALIFVT). The Cytoplasmic segment spans residues 778-789 (RSRSWSYVERPG). Residues 790 to 810 (FWLISAFFMAQLIATLIAVYA) form a helical membrane-spanning segment. Residues 811–818 (NWNFARIR) are Extracellular-facing. The helical transmembrane segment at 819-839 (GIGWGWAGVIWLYSIVFYIPL) threads the bilayer. Residues 840–954 (DILKFIIRYS…IEAIQQHYTL (115 aa)) lie on the Cytoplasmic side of the membrane. Residue Thr-886 is modified to Phosphothreonine. Ser-936 is subject to Phosphoserine. The interaction with 14-3-3 proteins stretch occupies residues 952–954 (YTL). Thr-953 is modified (phosphothreonine).

The protein belongs to the cation transport ATPase (P-type) (TC 3.A.3) family. Type IIIA subfamily. Binds to 14-3-3 proteins. The binding is induced by phosphorylation of Thr-953. Binding to 14-3-3 proteins activates the H(+)-ATPase. In terms of tissue distribution, anther specific. Expressed in guard cells.

It localises to the membrane. It catalyses the reaction ATP + H2O + H(+)(in) = ADP + phosphate + 2 H(+)(out). Functionally, the plasma membrane H(+) ATPase of plants and fungi generates a proton gradient that drives the active transport of nutrients by H(+)-symport. The resulting external acidification and/or internal alkinization may mediate growth responses. The protein is ATPase 9, plasma membrane-type (AHA9) of Arabidopsis thaliana (Mouse-ear cress).